The sequence spans 105 residues: MRGMGNMQGMMKQMQKMQKEMAKAQADLEAQEFTGTAGGGMVTVKATGKRVITDVVINEEVVDPEDIEMLQDLVLAATNDVLKQIEDTTSQTMGKFTQGLNIPGM.

Residues 1-16 (MRGMGNMQGMMKQMQK) show a composition bias toward low complexity. Positions 1–23 (MRGMGNMQGMMKQMQKMQKEMAK) are disordered.

It belongs to the YbaB/EbfC family. As to quaternary structure, homodimer.

It is found in the cytoplasm. Its subcellular location is the nucleoid. Functionally, binds to DNA and alters its conformation. May be involved in regulation of gene expression, nucleoid organization and DNA protection. The polypeptide is Nucleoid-associated protein Lm4b_02677 (Listeria monocytogenes serotype 4b (strain CLIP80459)).